The following is a 130-amino-acid chain: D-ribose pyranase (130 aa).

Histidine 20 acts as the Proton donor in catalysis. Substrate-binding positions include aspartate 28, histidine 97, and 119–121 (YAN).

It belongs to the RbsD / FucU family. RbsD subfamily. In terms of assembly, homodecamer.

The protein localises to the cytoplasm. It carries out the reaction beta-D-ribopyranose = beta-D-ribofuranose. Its pathway is carbohydrate metabolism; D-ribose degradation; D-ribose 5-phosphate from beta-D-ribopyranose: step 1/2. Its function is as follows. Catalyzes the interconversion of beta-pyran and beta-furan forms of D-ribose. This Paracidovorax citrulli (strain AAC00-1) (Acidovorax citrulli) protein is D-ribose pyranase.